The sequence spans 508 residues: MGLPWYRVHTVVLNDPGRLISVHIMHTALVAGWAGSMALYELAVFDPSDPVLDPMWRQGMFVIPFMTRLGITNSWGGWSITGGTVTDPGIWSYEGVAGSHIVFSGLCFLAAIWHWVYWDLEIFCDERTGKPSLDLPKIFGIHLFLSGVACFGFGAFHVTGLYGPGIWVSDPYGLTGKVQSVNPAWGVEGFDPFVPGGIASHHIAAGTLGILAGLFHLSVRPPQRLYKGLRMGNIETVLSSSIAAVFFAAFVVAGTMWYGSATTPIELFGPTRYQWDQGYFQQEIYRRVSAGLAENQSLSEAWSKIPEKLAFYDYIGNNPAKGGLFRAGSMDNGDGIAVGWLGHPIFRDKEGRELFVRRMPTFFETFPVVLIDGDGIVRADVPFRRAESKYSVEQVGVTVEFYGGELNGVSYSDPATVKKYARRAQLGEIFELDRATLKSDGVFRSSPRGWFTFGHASFALLFFFGHIWHGSRTLFRDVFAGIDPDLDSQVEFGAFQKLGDPTTRRQAV.

6 helical membrane passes run 21–36 (SVHI…WAGS), 101–115 (IVFS…IWHW), 140–156 (GIHL…FGAF), 203–218 (IAAG…FHLS), 237–252 (VLSS…AFVV), and 457–472 (SFAL…HGSR).

Belongs to the PsbB/PsbC family. PsbB subfamily. As to quaternary structure, PSII is composed of 1 copy each of membrane proteins PsbA, PsbB, PsbC, PsbD, PsbE, PsbF, PsbH, PsbI, PsbJ, PsbK, PsbL, PsbM, PsbT, PsbX, PsbY, PsbZ, Psb30/Ycf12, at least 3 peripheral proteins of the oxygen-evolving complex and a large number of cofactors. It forms dimeric complexes. It depends on Binds multiple chlorophylls. PSII binds additional chlorophylls, carotenoids and specific lipids. as a cofactor.

It is found in the plastid. The protein localises to the chloroplast thylakoid membrane. In terms of biological role, one of the components of the core complex of photosystem II (PSII). It binds chlorophyll and helps catalyze the primary light-induced photochemical processes of PSII. PSII is a light-driven water:plastoquinone oxidoreductase, using light energy to abstract electrons from H(2)O, generating O(2) and a proton gradient subsequently used for ATP formation. The sequence is that of Photosystem II CP47 reaction center protein from Fagopyrum esculentum subsp. ancestrale (Wild buckwheat).